The chain runs to 162 residues: 2-C-methyl-D-erythritol 2,4-cyclodiphosphate synthase (162 aa).

2 residues coordinate a divalent metal cation: Asp12 and His14. 4-CDP-2-C-methyl-D-erythritol 2-phosphate is bound by residues 12-14 (DVH) and 38-39 (HS). Residue His46 participates in a divalent metal cation binding. 4-CDP-2-C-methyl-D-erythritol 2-phosphate contacts are provided by residues 60-62 (DIG), 136-139 (TTTE), Phe143, and Arg146.

Belongs to the IspF family. In terms of assembly, homotrimer. It depends on a divalent metal cation as a cofactor.

It catalyses the reaction 4-CDP-2-C-methyl-D-erythritol 2-phosphate = 2-C-methyl-D-erythritol 2,4-cyclic diphosphate + CMP. The protein operates within isoprenoid biosynthesis; isopentenyl diphosphate biosynthesis via DXP pathway; isopentenyl diphosphate from 1-deoxy-D-xylulose 5-phosphate: step 4/6. Functionally, involved in the biosynthesis of isopentenyl diphosphate (IPP) and dimethylallyl diphosphate (DMAPP), two major building blocks of isoprenoid compounds. Catalyzes the conversion of 4-diphosphocytidyl-2-C-methyl-D-erythritol 2-phosphate (CDP-ME2P) to 2-C-methyl-D-erythritol 2,4-cyclodiphosphate (ME-CPP) with a corresponding release of cytidine 5-monophosphate (CMP). This chain is 2-C-methyl-D-erythritol 2,4-cyclodiphosphate synthase, found in Porphyromonas gingivalis (strain ATCC BAA-308 / W83).